The primary structure comprises 138 residues: Putative pre-16S rRNA nuclease (138 aa).

It belongs to the YqgF nuclease family.

It localises to the cytoplasm. Could be a nuclease involved in processing of the 5'-end of pre-16S rRNA. This is Putative pre-16S rRNA nuclease from Fusobacterium nucleatum subsp. nucleatum (strain ATCC 25586 / DSM 15643 / BCRC 10681 / CIP 101130 / JCM 8532 / KCTC 2640 / LMG 13131 / VPI 4355).